A 236-amino-acid chain; its full sequence is UPF0257 lipoprotein YnfC (236 aa).

The N-terminal stretch at 1–16 (MKKPLLLTLLCMILAG) is a signal peptide. Cys-17 is lipidated: N-palmitoyl cysteine. Cys-17 carries S-diacylglycerol cysteine lipidation.

This sequence belongs to the UPF0257 family.

The protein resides in the cell membrane. This Salmonella typhi protein is UPF0257 lipoprotein YnfC.